We begin with the raw amino-acid sequence, 193 residues long: MNNEVLAYINERLDEAHNYISSIFWVDGVLDYQYSNSDHDFIDHLNSMNPTHTKIVLIHSHGGADGWWIWGSSFLQFKDGSKLYDNEVNRWLNYDGYFIFAGACDSATYDDLGNTFLNKGFDAYFGYTDSVYTVNNARFYSAFFDKGRHLDVTISEARDHAEQQVLSEFGSNSDVVKNKIIGDSSLCLATSDW.

This is an uncharacterized protein from Archaeoglobus fulgidus (strain ATCC 49558 / DSM 4304 / JCM 9628 / NBRC 100126 / VC-16).